The primary structure comprises 420 residues: Protein-lysine 6-oxidase (420 aa).

A signal peptide spans 1–27; sequence MRCAPPGLLLAQLHACIFWSGLWPAGC. Positions 28–171 are cleaved as a propeptide — removed by BMP1; it reads QSPPAAWRQR…RPGREDVMVG (144 aa). Positions 54 to 177 are disordered; that stretch reads AQYQPPRRRQ…VMVGDDPYSP (124 aa). Residue Asn78 is glycosylated (N-linked (GlcNAc...) asparagine). The segment covering 82 to 92 has biased composition (low complexity); that stretch reads PRAAAAAAARP. Positions 93–105 are enriched in pro residues; sequence QPEPQPQAQPQPR. 2 stretches are compositionally biased toward basic residues: residues 107–119 and 134–147; these read RSSR…RRHW and APRR…SRRR. Tyr190 carries the post-translational modification Sulfotyrosine. Residues 216–420 form a lysyl-oxidase like region; that stretch reads PDLVPDPYYI…YASGCTISPY (205 aa). 5 disulfide bridges follow: Cys241/Cys247, Cys294/Cys343, Cys327/Cys333, Cys354/Cys364, and Cys401/Cys415. 3 residues coordinate Cu cation: His295, His297, and His299. The segment at residues 323-358 is a cross-link (lysine tyrosylquinone (Lys-Tyr)); that stretch reads KASFCLEDTSCDYGYYRRYACTAHTQGLSPGCYDTY. Tyr358 carries the post-translational modification 2',4',5'-topaquinone.

The protein belongs to the lysyl oxidase family. Cu cation is required as a cofactor. It depends on lysine tyrosylquinone residue as a cofactor. Post-translationally, the lysine tyrosylquinone cross-link (LTQ) is generated by condensation of the epsilon-amino group of a lysine with a topaquinone produced by oxidation of tyrosine. Proteolytically cleaved by BMP1 which removes the propeptide. Also proteolytically cleaved by ADAMTS2 and ADAMTS14, but not by ADAMTS3, at an additional cleavage site downstream of the BMP1 cleavage site. The propeptide plays a role in directing the deposition of this enzyme to elastic fibers, via interaction with tropoelastin. Cleavage by BMP1 to remove the propeptide does not increase enzymatic activity but increases binding to collagen. Cleavage by ADAMTS2 produces a form with reduced collagen-binding activity. In terms of processing, sulfated at Tyr-190 and also at either Tyr-186 or Tyr-187 which enhances binding to collagen.

Its subcellular location is the secreted. It localises to the extracellular space. The catalysed reaction is L-lysyl-[protein] + O2 + H2O = (S)-2-amino-6-oxohexanoyl-[protein] + H2O2 + NH4(+). Its function is as follows. Responsible for the post-translational oxidative deamination of peptidyl lysine residues in precursors to fibrous collagen and elastin. In terms of biological role, in addition to cross linking of extracellular matrix proteins, it may have a direct role in tumor suppression. This Gallus gallus (Chicken) protein is Protein-lysine 6-oxidase (LOX).